Reading from the N-terminus, the 212-residue chain is uncharacterized protein (212 aa).

Positions 1–18 (MQLTQVLAVAILAAGVSA) are cleaved as a signal peptide. Positions 108-180 (VSHNRVNAKQ…KDYGHKDYGH (73 aa)) are disordered. Positions 117 to 180 (QRRDDKKDYG…KDYGHKDYGH (64 aa)) are enriched in basic and acidic residues. Residues 120-210 (DDKKDYGKND…KDYGYKGYDD (91 aa)) are 15 X 5 AA tandem repeats of K-D-Y-G-H. Residues 123 to 127 (KDYGK) form repeat 1. A 2; truncated repeat occupies 128-132 (NDYGK). Tandem repeats lie at residues 133–137 (KDYGK), 138–142 (KDYGK), and 143–147 (KDYGK). One copy of the 6; truncated repeat lies at 148-152 (KEYDP). Repeat copies occupy residues 166-170 (KDYGH), 171-175 (KDYGH), 176-180 (KDYGH), 181-185 (KDYGH), and 186-190 (KDYGH). A 12; truncated repeat occupies 191–195 (DDYGY). Residues 196 to 200 (KGYDD) form a 13; truncated repeat. The 14; truncated repeat unit spans residues 201–205 (KDYGY). Residues 206 to 210 (KGYDD) form a 15; truncated repeat.

Its subcellular location is the secreted. This is an uncharacterized protein from Arthroderma benhamiae (strain ATCC MYA-4681 / CBS 112371) (Trichophyton mentagrophytes).